The following is a 149-amino-acid chain: uncharacterized protein (149 aa).

The interval 34-94 (HTPCLPKVPR…NPIGSQRIHS (61 aa)) is disordered. Residues 56 to 66 (QSPHRQGDRRR) are compositionally biased toward basic and acidic residues.

It localises to the mitochondrion. This is an uncharacterized protein from Arabidopsis thaliana (Mouse-ear cress).